Consider the following 498-residue polypeptide: L-amino acid oxidase Cdc18 (498 aa).

An N-terminal signal peptide occupies residues 1 to 2; that stretch reads SC. C12 and C173 are joined by a disulfide. FAD-binding positions include 45 to 46, 65 to 66, R73, and 87 to 90; these read MA, EA, and GPMR. Substrate-binding residues include R90 and H223. V263 contributes to the FAD binding site. C333 and C414 form a disulfide bridge. N363 carries an N-linked (GlcNAc...) asparagine glycan. Y374 provides a ligand contact to substrate. FAD is bound by residues E459 and 466–471; that span reads GWIDST. Position 466–467 (466–467) interacts with substrate; it reads GW.

This sequence belongs to the flavin monoamine oxidase family. FIG1 subfamily. Monomer. This is in contrast with most of its orthologs, that are non-covalently linked homodimers. FAD serves as cofactor. Expressed by the venom gland.

The protein localises to the secreted. It carries out the reaction an L-alpha-amino acid + O2 + H2O = a 2-oxocarboxylate + H2O2 + NH4(+). It catalyses the reaction L-leucine + O2 + H2O = 4-methyl-2-oxopentanoate + H2O2 + NH4(+). Catalyzes an oxidative deamination of predominantly hydrophobic and aromatic L-amino acids, thus producing hydrogen peroxide that may contribute to the diverse toxic effects of this enzyme. Shows activity on L-Leu. Damages cell membranes of the Gram-positive bacteria S.aureus (MIC=8 ug/ml and MBC=16 ug/ml) and the Gram-negative bacteria A.baumannii (MIC=16 ug/ml and MBC=32 ug/ml). This antimicrobial activity is dependent on the production of hydrogen peroxyde, since it is inhibited by catalase, a hydrogen peroxyde scavenger. In Crotalus durissus cumanensis (South American rattlesnake), this protein is L-amino acid oxidase Cdc18.